A 255-amino-acid chain; its full sequence is MSQKKAPLFEIRSGTVDALLLSPRTADMDALAAELTRRFADTPEFFSNDVIAIDVRRLAADERLPIDRLVETLTGLRARAIGVVASPEQAEWAQACGLPLLDSHGRRPRGERSEEAAEAVPAAAEPVPAPAASPAPPVEAVAMQPGAMIIEKPLRSGQRVYARGDLVVLDLVSDGAEVIAEGNIYVYASLRGRALAGVKGNLDARIFCTCLEPQLISIAGIYRTGETPWPEAFASKPAQIRLSENTLVLEPLRMK.

Positions 103 to 115 (SHGRRPRGERSEE) are enriched in basic and acidic residues. The tract at residues 103–136 (SHGRRPRGERSEEAAEAVPAAAEPVPAPAASPAP) is disordered. Positions 127 to 136 (VPAPAASPAP) are enriched in pro residues.

The protein belongs to the MinC family. As to quaternary structure, interacts with MinD and FtsZ.

In terms of biological role, cell division inhibitor that blocks the formation of polar Z ring septums. Rapidly oscillates between the poles of the cell to destabilize FtsZ filaments that have formed before they mature into polar Z rings. Prevents FtsZ polymerization. This chain is Probable septum site-determining protein MinC, found in Ralstonia nicotianae (strain ATCC BAA-1114 / GMI1000) (Ralstonia solanacearum).